A 217-amino-acid polypeptide reads, in one-letter code: Elongation factor Ts (217 aa).

Residues 82 to 85 form an involved in Mg(2+) ion dislocation from EF-Tu region; sequence TDFV.

The protein belongs to the EF-Ts family.

It localises to the cytoplasm. Its function is as follows. Associates with the EF-Tu.GDP complex and induces the exchange of GDP to GTP. It remains bound to the aminoacyl-tRNA.EF-Tu.GTP complex up to the GTP hydrolysis stage on the ribosome. The polypeptide is Elongation factor Ts (Desulforamulus reducens (strain ATCC BAA-1160 / DSM 100696 / MI-1) (Desulfotomaculum reducens)).